The sequence spans 1075 residues: Protein EXPORTIN 1A (1075 aa).

The Importin N-terminal domain occupies 37 to 103; that stretch reads ADQILRDLQA…KNYISEVIVQ (67 aa). HEAT repeat units follow at residues 91-130, 135-171, 232-267, 336-373, 388-425, 474-513, 563-600, 612-649, 682-719, 756-793, 798-835, and 894-934; these read DGMK…QIVK, AKWT…EVFD, IFES…LNFG, SLLL…ELFD, MGLQ…LMIN, DTEK…SMAE, KFLK…KCKR, PFVS…AESD, LKDQ…IFLD, RETL…DYAR, ARES…CTLE, and ETGL…VLTD.

This sequence belongs to the exportin family. Interacts with RAN1. Expressed ubiquitously, with higher levels in stems, inflorescences and roots. Present in mature pollen grains, unpollinated pistils, and 2-week-old seedlings.

It localises to the nucleus. Its subcellular location is the nuclear pore complex. The protein localises to the nucleus membrane. Its function is as follows. Receptor for the leucine-rich nuclear export signal (NES). Binds cooperatively to the NES on its target protein and to the small GTPase Ran in its active GTP-bound form. Required for the maternal-to-embryonic transition and during gametophyte development. Involved in heat-induced oxidative stress basal resistance. The sequence is that of Protein EXPORTIN 1A from Arabidopsis thaliana (Mouse-ear cress).